A 358-amino-acid polypeptide reads, in one-letter code: Holliday junction branch migration complex subunit RuvB (358 aa).

Residues 1–183 (MAEPSLVSGG…FGFTGHLEFY (183 aa)) form a large ATPase domain (RuvB-L) region. Residues L22, R23, G64, K67, T68, T69, 130-132 (EDF), R173, Y183, and R220 contribute to the ATP site. Residue T68 coordinates Mg(2+). Residues 184-254 (SVAELELVLR…SASAALDMYE (71 aa)) are small ATPAse domain (RuvB-S). The head domain (RuvB-H) stretch occupies residues 257–358 (ERGLDRLDRS…NHAESVDTVG (102 aa)). 2 residues coordinate DNA: R312 and R317.

The protein belongs to the RuvB family. Homohexamer. Forms an RuvA(8)-RuvB(12)-Holliday junction (HJ) complex. HJ DNA is sandwiched between 2 RuvA tetramers; dsDNA enters through RuvA and exits via RuvB. An RuvB hexamer assembles on each DNA strand where it exits the tetramer. Each RuvB hexamer is contacted by two RuvA subunits (via domain III) on 2 adjacent RuvB subunits; this complex drives branch migration. In the full resolvosome a probable DNA-RuvA(4)-RuvB(12)-RuvC(2) complex forms which resolves the HJ.

It is found in the cytoplasm. It catalyses the reaction ATP + H2O = ADP + phosphate + H(+). Functionally, the RuvA-RuvB-RuvC complex processes Holliday junction (HJ) DNA during genetic recombination and DNA repair, while the RuvA-RuvB complex plays an important role in the rescue of blocked DNA replication forks via replication fork reversal (RFR). RuvA specifically binds to HJ cruciform DNA, conferring on it an open structure. The RuvB hexamer acts as an ATP-dependent pump, pulling dsDNA into and through the RuvAB complex. RuvB forms 2 homohexamers on either side of HJ DNA bound by 1 or 2 RuvA tetramers; 4 subunits per hexamer contact DNA at a time. Coordinated motions by a converter formed by DNA-disengaged RuvB subunits stimulates ATP hydrolysis and nucleotide exchange. Immobilization of the converter enables RuvB to convert the ATP-contained energy into a lever motion, pulling 2 nucleotides of DNA out of the RuvA tetramer per ATP hydrolyzed, thus driving DNA branch migration. The RuvB motors rotate together with the DNA substrate, which together with the progressing nucleotide cycle form the mechanistic basis for DNA recombination by continuous HJ branch migration. Branch migration allows RuvC to scan DNA until it finds its consensus sequence, where it cleaves and resolves cruciform DNA. This Paenarthrobacter aurescens (strain TC1) protein is Holliday junction branch migration complex subunit RuvB.